Consider the following 387-residue polypeptide: MSADRIPSFSVAELNTAIGNLLERGFAPRFLVEATVSRPQLKKGHLWLTLTDGEASISAVAWASQLRQLRYRPEDGDGVTVVGKLNFWAARASLNVQVLDIRPSLSTVLRQFELVRRRLEEAGLLDITRRRPLPRQPRTLAVLTSVPSSALADMLRTASERWPMTRLLVVPIPVQGSVAARIREVLGRLAEEASALGLDALVLARGGGSREDLAVFDDEDLCRDLAAFPVPVVTGLGHEDDLTVADLVADHRAATPTAAIVALLPDRHVALRELQQQRQRLRELRSRWLERQHQRLLDRRQALALLTPQRRLQQLRQQLEQRRALLRALSPQRWLKQGLALVSNGQGMTIDGVKGVRKKDTLTLSFHDGSIETVVTQVRPQNSSSTP.

It belongs to the XseA family. Heterooligomer composed of large and small subunits.

It localises to the cytoplasm. It catalyses the reaction Exonucleolytic cleavage in either 5'- to 3'- or 3'- to 5'-direction to yield nucleoside 5'-phosphates.. In terms of biological role, bidirectionally degrades single-stranded DNA into large acid-insoluble oligonucleotides, which are then degraded further into small acid-soluble oligonucleotides. The sequence is that of Exodeoxyribonuclease 7 large subunit from Parasynechococcus marenigrum (strain WH8102).